We begin with the raw amino-acid sequence, 493 residues long: MSFKDLRSFIDHLEANGELKRIAHPVDPHLEMTEIADRVLRAKGPALLFENPVGKTMPVLANLFGTPKRVAMALGKEDPLALRDVGELLAFLKEPEPPRGFKDAISKIPMFKQALNMPPKTVRNAPCQEVVVSGDEVDLTKLPIQHCWPGDVAPLVTWGLTITKGPRQKRQNLGIYRQQLLGKNKLIMRWLDHRGGALDFKDFKEQHPGERYPVVVALGADPVTILGAVTPVPDAMSEYAFAGLLRGERTEVCKALSCDLEVPATSEIILEGYIEPGEMAEEGPYGDHTGYYNETDEFPVFTVTHVSHRRDAIYHSTYTGRPPDEPAMLGVALNEVFVPILRKQYPEIVDFYLPPEGCSYRMAVISIRKQYPGHAKRVMMGAWSFLRQFMYTKFIIIVDEDVNCRDWNDVIWAITTRMDPKRDTVMIDNTPIDYLDFASPVAGLGSKMGMDATNKWEGETDREWGTPIVMDEAVKQRIDAIWDDLGIDDAPTL.

Position 172 (Asn172) interacts with Mn(2+). Residues 175–177 (IYR), 189–191 (RWL), and 194–195 (RG) contribute to the prenylated FMN site. Glu238 is a Mn(2+) binding site. The Proton donor role is filled by Asp287.

Belongs to the UbiD family. Homohexamer. Requires prenylated FMN as cofactor. Mn(2+) is required as a cofactor.

The protein localises to the cell membrane. It carries out the reaction a 4-hydroxy-3-(all-trans-polyprenyl)benzoate + H(+) = a 2-(all-trans-polyprenyl)phenol + CO2. The protein operates within cofactor biosynthesis; ubiquinone biosynthesis. In terms of biological role, catalyzes the decarboxylation of 3-octaprenyl-4-hydroxy benzoate to 2-octaprenylphenol, an intermediate step in ubiquinone biosynthesis. The sequence is that of 3-octaprenyl-4-hydroxybenzoate carboxy-lyase from Shewanella loihica (strain ATCC BAA-1088 / PV-4).